The primary structure comprises 281 residues: UPF0273 protein PAE3143 (281 aa).

The 245-residue stretch at 4–248 folds into the KaiC domain; that stretch reads PRVRSYVPGL…YIKITGSSVR (245 aa). 31–38 is a binding site for ATP; the sequence is GGPGTGKS.

This sequence belongs to the UPF0273 family.

This chain is UPF0273 protein PAE3143, found in Pyrobaculum aerophilum (strain ATCC 51768 / DSM 7523 / JCM 9630 / CIP 104966 / NBRC 100827 / IM2).